Here is a 172-residue protein sequence, read N- to C-terminus: Ribosome maturation factor RimM (172 aa).

The 73-residue stretch at 96-168 folds into the PRC barrel domain; it reads DGEFYYHEII…RVDVEILEGL (73 aa).

The protein belongs to the RimM family. Binds ribosomal protein uS19.

The protein resides in the cytoplasm. Functionally, an accessory protein needed during the final step in the assembly of 30S ribosomal subunit, possibly for assembly of the head region. Essential for efficient processing of 16S rRNA. May be needed both before and after RbfA during the maturation of 16S rRNA. It has affinity for free ribosomal 30S subunits but not for 70S ribosomes. This is Ribosome maturation factor RimM from Streptococcus pneumoniae serotype 4 (strain ATCC BAA-334 / TIGR4).